A 702-amino-acid chain; its full sequence is Elongation factor G (702 aa).

In terms of domain architecture, tr-type G spans 8 to 290; it reads SRYRNIGISA…AIIEFLPAPN (283 aa). GTP-binding positions include 17-24, 88-92, and 142-145; these read AHIDAGKT, DTPGH, and NKMD.

It belongs to the TRAFAC class translation factor GTPase superfamily. Classic translation factor GTPase family. EF-G/EF-2 subfamily.

The protein localises to the cytoplasm. Functionally, catalyzes the GTP-dependent ribosomal translocation step during translation elongation. During this step, the ribosome changes from the pre-translocational (PRE) to the post-translocational (POST) state as the newly formed A-site-bound peptidyl-tRNA and P-site-bound deacylated tRNA move to the P and E sites, respectively. Catalyzes the coordinated movement of the two tRNA molecules, the mRNA and conformational changes in the ribosome. This Buchnera aphidicola subsp. Acyrthosiphon pisum (strain 5A) protein is Elongation factor G.